The sequence spans 201 residues: ATP-dependent Clp protease proteolytic subunit (201 aa).

The active-site Nucleophile is serine 105. Residue histidine 130 is part of the active site.

It belongs to the peptidase S14 family. As to quaternary structure, fourteen ClpP subunits assemble into 2 heptameric rings which stack back to back to give a disk-like structure with a central cavity, resembling the structure of eukaryotic proteasomes.

The protein localises to the cytoplasm. The catalysed reaction is Hydrolysis of proteins to small peptides in the presence of ATP and magnesium. alpha-casein is the usual test substrate. In the absence of ATP, only oligopeptides shorter than five residues are hydrolyzed (such as succinyl-Leu-Tyr-|-NHMec, and Leu-Tyr-Leu-|-Tyr-Trp, in which cleavage of the -Tyr-|-Leu- and -Tyr-|-Trp bonds also occurs).. Functionally, cleaves peptides in various proteins in a process that requires ATP hydrolysis. Has a chymotrypsin-like activity. Plays a major role in the degradation of misfolded proteins. In Acinetobacter baylyi (strain ATCC 33305 / BD413 / ADP1), this protein is ATP-dependent Clp protease proteolytic subunit.